The primary structure comprises 379 residues: Cytochrome b (379 aa).

Helical transmembrane passes span 33 to 53 (FGSLLGLCLISQILTGLFLAM), 77 to 98 (WLIRNLHANGASFFFICLYLHI), 113 to 133 (WNIGVVLFLLVMMTAFVGYVL), and 178 to 198 (FFAFHFLFPFVVAGATMIHLL). The heme b site is built by histidine 83 and histidine 97. Heme b-binding residues include histidine 182 and histidine 196. Histidine 201 is a binding site for a ubiquinone. A run of 4 helical transmembrane segments spans residues 226–246 (YKDLLGFIIMLTALTMLALFY), 288–308 (LGGVLALLSSILVLMVVPILH), 320–340 (ASQLLFWILVADMLVLTWIGG), and 347–367 (YIIIGQVASVLYFSLFLVLNP).

Belongs to the cytochrome b family. As to quaternary structure, the cytochrome bc1 complex contains 3 respiratory subunits (MT-CYB, CYC1 and UQCRFS1), 2 core proteins (UQCRC1 and UQCRC2) and probably 6 low-molecular weight proteins. The cofactor is heme b.

It is found in the mitochondrion inner membrane. Functionally, component of the ubiquinol-cytochrome c reductase complex (complex III or cytochrome b-c1 complex) that is part of the mitochondrial respiratory chain. The b-c1 complex mediates electron transfer from ubiquinol to cytochrome c. Contributes to the generation of a proton gradient across the mitochondrial membrane that is then used for ATP synthesis. This Anguilla reinhardtii (Speckled longfin eel) protein is Cytochrome b (mt-cyb).